A 385-amino-acid polypeptide reads, in one-letter code: Arginine biosynthesis bifunctional protein ArgJ (385 aa).

The substrate site is built by T142, K168, T179, E259, N380, and T385. The active-site Nucleophile is the T179.

It belongs to the ArgJ family. Heterotetramer of two alpha and two beta chains.

Its subcellular location is the cytoplasm. The enzyme catalyses N(2)-acetyl-L-ornithine + L-glutamate = N-acetyl-L-glutamate + L-ornithine. The catalysed reaction is L-glutamate + acetyl-CoA = N-acetyl-L-glutamate + CoA + H(+). Its pathway is amino-acid biosynthesis; L-arginine biosynthesis; L-ornithine and N-acetyl-L-glutamate from L-glutamate and N(2)-acetyl-L-ornithine (cyclic): step 1/1. The protein operates within amino-acid biosynthesis; L-arginine biosynthesis; N(2)-acetyl-L-ornithine from L-glutamate: step 1/4. Functionally, catalyzes two activities which are involved in the cyclic version of arginine biosynthesis: the synthesis of N-acetylglutamate from glutamate and acetyl-CoA as the acetyl donor, and of ornithine by transacetylation between N(2)-acetylornithine and glutamate. This is Arginine biosynthesis bifunctional protein ArgJ from Leptospira interrogans serogroup Icterohaemorrhagiae serovar Lai (strain 56601).